The sequence spans 611 residues: DNA mismatch repair protein MutL (611 aa).

It belongs to the DNA mismatch repair MutL/HexB family.

This protein is involved in the repair of mismatches in DNA. It is required for dam-dependent methyl-directed DNA mismatch repair. May act as a 'molecular matchmaker', a protein that promotes the formation of a stable complex between two or more DNA-binding proteins in an ATP-dependent manner without itself being part of a final effector complex. The chain is DNA mismatch repair protein MutL from Borreliella afzelii (strain PKo) (Borrelia afzelii).